The following is an 85-amino-acid chain: Small ribosomal subunit protein bS18 (85 aa).

The protein belongs to the bacterial ribosomal protein bS18 family. In terms of assembly, part of the 30S ribosomal subunit. Forms a tight heterodimer with protein bS6.

Binds as a heterodimer with protein bS6 to the central domain of the 16S rRNA, where it helps stabilize the platform of the 30S subunit. The protein is Small ribosomal subunit protein bS18 of Hyphomonas neptunium (strain ATCC 15444).